We begin with the raw amino-acid sequence, 825 residues long: MVGKSQQTDVIEKKKHMAIPKSSSPKATHRIGNTSGSKGSYSAKAYESIRVSSELQQTWTKRKHGQEMTSKSLQTDTIVEEKKEVKLVEETVVPEEKSADVREAAIELPESVQDVEIPPNIPSVQLKMDRSQQTSRTGYWTMMNIPPVEKVDKEQQTYFSESEIVVISRPDSSSTKSKEDALKHKSSGKIFASEHPEFQPATNSNEEIGQKNISRTSFTQETKKGPPVLLEDELREEVTVPVVQEGSAVKKVASAEIEPPSTEKFPAKIQPPLVEEATAKAEPRPAEETHVQVQPSTEETPDAEAATAVAENSVKVQPPPAEEAPLVEFPAEIQPPSAEESPSVELLAEILPPSAEESPSEEPPAEILPPPAEKSPSVELLGEIRSPSAQKAPIEVQPLPAEGALEEAPAKVEPPTVEETLADVQPLLPEEAPREEARELQLSTAMETPAEEAPTEFQSPLPKETTAEEASAEIQLLAATEPPADETPAEARSPLSEETSAEEAHAEVQSPLAEETTAEEASAEIQLLAAIEAPADETPAEAQSPLSEETSAEEAPAEVQSPSAKGVSIEEAPLELQPPSGEETTAEEASAAIQLLAATEASAEEAPAEVQPPPAEEAPAEVQPPPAEEAPAEVQPPPAEEAPAEVQPPPAEEAPAEVQPPPAEEAPAEVQPPPAEEAPAEVQSLPAEETPIEETLAAVHSPPADDVPAEEASVDKHSPPADLLLTEEFPIGEASAEVSPPPSEQTPEDEALVENVSTEFQSPQVAGIPAVKLGSVVLEGEAKFEEVSKINSVLKDLSNTNDGQAPTLEIESVFHIELKQRPPEL.

Disordered regions lie at residues 1 to 43 (MVGK…SYSA) and 113 to 139 (QDVE…RTGY). Residues 21 to 40 (KSSSPKATHRIGNTSGSKGS) show a composition bias toward polar residues. Phosphoserine is present on S160. Disordered stretches follow at residues 168–232 (SRPD…LLED), 244–718 (QEGS…DKHS), and 732–751 (GEAS…EDEA). Positions 200–220 (PATNSNEEIGQKNISRTSFTQ) are enriched in polar residues. Positions 277 to 290 (ATAKAEPRPAEETH) are enriched in basic and acidic residues. Low complexity-rich tracts occupy residues 348–357 (AEILPPSAEE) and 398–407 (PLPAEGALEE). The segment covering 610–676 (VQPPPAEEAP…PAEVQPPPAE (67 aa)) has biased composition (pro residues).

In terms of assembly, interacts with CABYR. Interacts with ROPN1 and ROPN1L; the interaction increases upon spermatozoa capacitation conditions. Post-translationally, phosphorylated by PKA upon spermatozoa capacitation conditions.

Its subcellular location is the cell projection. It is found in the cilium. It localises to the flagellum. Functionally, may be involved in the later stages of fibrous sheath biogenesis and spermatozoa capacitation. Inhibits ROPN1 and ROPN1L SUMOylation. Binds calcium. In Homo sapiens (Human), this protein is Fibrous sheath CABYR-binding protein (FSCB).